Reading from the N-terminus, the 430-residue chain is tRNA(Ile)-lysidine synthase (430 aa).

27–32 (SGGSDS) contributes to the ATP binding site.

Belongs to the tRNA(Ile)-lysidine synthase family.

The protein resides in the cytoplasm. It carries out the reaction cytidine(34) in tRNA(Ile2) + L-lysine + ATP = lysidine(34) in tRNA(Ile2) + AMP + diphosphate + H(+). Functionally, ligates lysine onto the cytidine present at position 34 of the AUA codon-specific tRNA(Ile) that contains the anticodon CAU, in an ATP-dependent manner. Cytidine is converted to lysidine, thus changing the amino acid specificity of the tRNA from methionine to isoleucine. The polypeptide is tRNA(Ile)-lysidine synthase (Rickettsia bellii (strain OSU 85-389)).